A 58-amino-acid polypeptide reads, in one-letter code: MAVPKKRTSASMKKIRNHSWKIKSVEKSLKSFSLAQSVLSGRSKSFYYGTEKKPFQKN.

This sequence belongs to the bacterial ribosomal protein bL32 family.

Its subcellular location is the plastid. It is found in the chloroplast. The polypeptide is Large ribosomal subunit protein bL32c (rpl32) (Adiantum capillus-veneris (Maidenhair fern)).